The following is a 114-amino-acid chain: Ribonuclease P protein component (114 aa).

It belongs to the RnpA family. In terms of assembly, consists of a catalytic RNA component (M1 or rnpB) and a protein subunit.

The catalysed reaction is Endonucleolytic cleavage of RNA, removing 5'-extranucleotides from tRNA precursor.. In terms of biological role, RNaseP catalyzes the removal of the 5'-leader sequence from pre-tRNA to produce the mature 5'-terminus. It can also cleave other RNA substrates such as 4.5S RNA. The protein component plays an auxiliary but essential role in vivo by binding to the 5'-leader sequence and broadening the substrate specificity of the ribozyme. This Limosilactobacillus fermentum (strain NBRC 3956 / LMG 18251) (Lactobacillus fermentum) protein is Ribonuclease P protein component.